A 639-amino-acid chain; its full sequence is Alpha-dioxygenase 1 (639 aa).

Histidine 163 acts as the Proton acceptor in catalysis. Position 164 (aspartate 164) interacts with Ca(2+). Heme b is bound at residue histidine 168. Residues threonine 216, tryptophan 218, aspartate 220, and serine 222 each coordinate Ca(2+). The heme b site is built by histidine 389, arginine 486, and arginine 490.

Belongs to the peroxidase family. Forms monomers in solution. Heme b serves as cofactor. The cofactor is Ca(2+). In terms of tissue distribution, expressed in roots (epiderm), mature flowers (e.g. anthers) and senescing leaves.

The protein resides in the lipid droplet. The enzyme catalyses a 1,2-saturated fatty acid + O2 = a (2R)-2-hydroperoxy fatty acid. It carries out the reaction (9Z,12Z,15Z)-octadecatrienoate + O2 = (R)-2-hydroperoxy-(9Z,12Z,15Z)-octadecatrienoate. The catalysed reaction is hexadecanoate + O2 = (2R)-2-hydroperoxyhexadecanoate. It catalyses the reaction (9Z,12Z)-octadecadienoate + O2 = (2R,9Z,12Z)-2-hydroperoxyoctadecadienoate. The enzyme catalyses (9Z)-octadecenoate + O2 = (2R,9Z)-2-hydroperoxyoctadecenoate. Functionally, alpha-dioxygenase that catalyzes the primary oxygenation step of a variety of 14-20 carbon fatty acids, containing up to three unsaturated bonds, into their corresponding 2R-hydroperoxides. Involved in the production of oxylipins that function in cell signaling, wound healing, and protection from infection. Mediates protection against oxidative stress and cell death, probably by generating some lipid-derived molecules. Promotes local and systemic plant defense in a salicylic acid (SA)-dependent manner, including the establishment of systemic acquired resistance (SAR) in response to incompatible interaction. Involved in a negative regulation of abscisic acid (ABA)-mediated signaling pathway. In Arabidopsis thaliana (Mouse-ear cress), this protein is Alpha-dioxygenase 1.